Here is a 921-residue protein sequence, read N- to C-terminus: Alanine--tRNA ligase (921 aa).

The Zn(2+) site is built by His602, His606, Cys706, and His710.

This sequence belongs to the class-II aminoacyl-tRNA synthetase family. Zn(2+) serves as cofactor.

The protein localises to the cytoplasm. It carries out the reaction tRNA(Ala) + L-alanine + ATP = L-alanyl-tRNA(Ala) + AMP + diphosphate. Its function is as follows. Catalyzes the attachment of alanine to tRNA(Ala) in a two-step reaction: alanine is first activated by ATP to form Ala-AMP and then transferred to the acceptor end of tRNA(Ala). Also edits incorrectly charged Ser-tRNA(Ala) and Gly-tRNA(Ala) via its editing domain. The polypeptide is Alanine--tRNA ligase (Hyperthermus butylicus (strain DSM 5456 / JCM 9403 / PLM1-5)).